Consider the following 335-residue polypeptide: Ketol-acid reductoisomerase (NADP(+)) (335 aa).

Residues 1-182 form the KARI N-terminal Rossmann domain; the sequence is MATIIYDNET…GATRAGVYET (182 aa). Residues 25-28, Arg48, Ser51, Ser53, and 83-86 each bind NADP(+); these read YGSQ and DEKQ. Residue His108 is part of the active site. Gly134 is an NADP(+) binding site. The 146-residue stretch at 183–328 folds into the KARI C-terminal knotted domain; sequence TFREETETDL…KEIRANIPWL (146 aa). Mg(2+) is bound by residues Asp191, Glu195, Glu227, and Glu231. Residue Ser252 participates in substrate binding.

The protein belongs to the ketol-acid reductoisomerase family. Requires Mg(2+) as cofactor.

The catalysed reaction is (2R)-2,3-dihydroxy-3-methylbutanoate + NADP(+) = (2S)-2-acetolactate + NADPH + H(+). The enzyme catalyses (2R,3R)-2,3-dihydroxy-3-methylpentanoate + NADP(+) = (S)-2-ethyl-2-hydroxy-3-oxobutanoate + NADPH + H(+). It participates in amino-acid biosynthesis; L-isoleucine biosynthesis; L-isoleucine from 2-oxobutanoate: step 2/4. It functions in the pathway amino-acid biosynthesis; L-valine biosynthesis; L-valine from pyruvate: step 2/4. In terms of biological role, involved in the biosynthesis of branched-chain amino acids (BCAA). Catalyzes an alkyl-migration followed by a ketol-acid reduction of (S)-2-acetolactate (S2AL) to yield (R)-2,3-dihydroxy-isovalerate. In the isomerase reaction, S2AL is rearranged via a Mg-dependent methyl migration to produce 3-hydroxy-3-methyl-2-ketobutyrate (HMKB). In the reductase reaction, this 2-ketoacid undergoes a metal-dependent reduction by NADPH to yield (R)-2,3-dihydroxy-isovalerate. This Methanosarcina acetivorans (strain ATCC 35395 / DSM 2834 / JCM 12185 / C2A) protein is Ketol-acid reductoisomerase (NADP(+)).